The primary structure comprises 521 residues: uncharacterized protein (521 aa).

The tract at residues 1–25 (MLQRSLGVNGRKLAMSARSAKRERK) is disordered. 6 consecutive transmembrane segments (helical) span residues 68–88 (GAVW…GAVL), 114–134 (VLIV…SLTV), 160–180 (VVLA…HTVG), 192–212 (VAVT…IYFL), 290–310 (ALLV…GWCW), and 399–419 (LLFW…CAQI).

It is found in the cell membrane. This is an uncharacterized protein from Mycobacterium tuberculosis (strain CDC 1551 / Oshkosh).